The chain runs to 87 residues: uncharacterized protein (87 aa).

The protein to B.subtilis XkdR.

This is an uncharacterized protein from Bacillus subtilis (strain 168).